The following is a 363-amino-acid chain: MKLRHFLIFLMLIPISSSICFDLKTLQCWPMEIQEMALMLTARNTARYDCSGKSKSEWYETGQKRLGWGIYYISSGLFFQLIGWPVIWVFITKFSMTNALKVYRIMVFIGLIEITEIWGNSVFPGFVAVFGEVYCTSPILMTIVGKMTMVQWVLGSSSAAFLGFHRLCDMIQKLEWLVNTNTKTGLWLTVLFFYACYGSIFFDTVLFNSDYMAPLLDPMIGKQGIIYSNNFLYFHNIIVATTLILVYACLCTLWSSREMNTSSLHVSKFQRSILLQSICISLTYAIPAISFVTMFVLPIPKWFFHVSDITYQLSGGLPFIMYICLNKRVREEFLHLLRVCRKAEKSQVAVIPLGNSTVSAFNN.

A signal peptide spans 1–18 (MKLRHFLIFLMLIPISSS). Transmembrane regions (helical) follow at residues 70–90 (IYYI…IWVF), 107–127 (VFIG…PGFV), 143–163 (IVGK…AFLG), 187–207 (WLTV…TVLF), 231–251 (FLYF…ACLC), 278–298 (ICIS…FVLP), and 303–323 (FFHV…IMYI).

The protein belongs to the nematode receptor-like protein srt family.

Its subcellular location is the membrane. The polypeptide is Serpentine receptor class T-55 (srt-55) (Caenorhabditis elegans).